The primary structure comprises 479 residues: Hydrogenase-4 component D (479 aa).

15 helical membrane passes run 3 to 23, 30 to 50, 55 to 75, 80 to 100, 117 to 137, 168 to 188, 208 to 228, 238 to 258, 270 to 290, 300 to 320, 330 to 350, 369 to 389, 390 to 410, 411 to 431, and 458 to 478; these read NLAL…SFSP, WGVL…SAFY, VAVT…LVID, LILF…TGYL, AFLL…TLLG, ALLI…TLFL, LVYG…PMQA, TPIS…YIFA, VIGG…FLMY, LAWS…LSIF, IAYI…AGAL, LPLP…VPPF, NGFF…VEYW, ILLP…AWFI, and LVLI…ATWL.

It belongs to the complex I subunit 5 family.

It is found in the cell inner membrane. Possible component of hydrogenase 4. This chain is Hydrogenase-4 component D, found in Escherichia coli (strain K12).